We begin with the raw amino-acid sequence, 224 residues long: 7-cyano-7-deazaguanine synthase (224 aa).

12–22 serves as a coordination point for ATP; that stretch reads LSGGLDSSTVT. Cys193, Cys201, Cys204, and Cys207 together coordinate Zn(2+).

Belongs to the QueC family. Zn(2+) serves as cofactor.

The catalysed reaction is 7-carboxy-7-deazaguanine + NH4(+) + ATP = 7-cyano-7-deazaguanine + ADP + phosphate + H2O + H(+). The protein operates within purine metabolism; 7-cyano-7-deazaguanine biosynthesis. In terms of biological role, catalyzes the ATP-dependent conversion of 7-carboxy-7-deazaguanine (CDG) to 7-cyano-7-deazaguanine (preQ(0)). This chain is 7-cyano-7-deazaguanine synthase, found in Prochlorococcus marinus (strain MIT 9215).